We begin with the raw amino-acid sequence, 272 residues long: 3-methyl-2-oxobutanoate hydroxymethyltransferase (272 aa).

Positions 51 and 90 each coordinate Mg(2+). Residues 51–52 (DS), Asp-90, and Lys-118 contribute to the 3-methyl-2-oxobutanoate site. Glu-120 is a Mg(2+) binding site. Glu-187 (proton acceptor) is an active-site residue.

It belongs to the PanB family. As to quaternary structure, homodecamer; pentamer of dimers. Mg(2+) serves as cofactor.

The protein resides in the cytoplasm. It catalyses the reaction 3-methyl-2-oxobutanoate + (6R)-5,10-methylene-5,6,7,8-tetrahydrofolate + H2O = 2-dehydropantoate + (6S)-5,6,7,8-tetrahydrofolate. The protein operates within cofactor biosynthesis; (R)-pantothenate biosynthesis; (R)-pantoate from 3-methyl-2-oxobutanoate: step 1/2. Catalyzes the reversible reaction in which hydroxymethyl group from 5,10-methylenetetrahydrofolate is transferred onto alpha-ketoisovalerate to form ketopantoate. The protein is 3-methyl-2-oxobutanoate hydroxymethyltransferase of Xylella fastidiosa (strain M23).